Reading from the N-terminus, the 373-residue chain is Leucoanthocyanidin dioxygenase 2 (373 aa).

The Fe2OG dioxygenase domain occupies 216–315 (LLLQLKINYY…RVSWVVFCEP (100 aa)). The Fe cation site is built by His-240, Asp-242, and His-296. A 2-oxoglutarate-binding site is contributed by Arg-306.

The protein belongs to the iron/ascorbate-dependent oxidoreductase family. The cofactor is L-ascorbate. It depends on Fe(2+) as a cofactor.

The enzyme catalyses a (2R,3S,4S)-leucoanthocyanidin + 2-oxoglutarate + O2 = a 4-H-anthocyanidin with a 3-hydroxy group + succinate + CO2 + 2 H2O. It functions in the pathway pigment biosynthesis; anthocyanin biosynthesis. Involved in anthocyanin and protoanthocyanidin biosynthesis by catalyzing the oxidation of leucoanthocyanidins into anthocyanidins. This chain is Leucoanthocyanidin dioxygenase 2, found in Oryza sativa subsp. japonica (Rice).